The sequence spans 349 residues: 4-hydroxythreonine-4-phosphate dehydrogenase (349 aa).

Threonine 136 contributes to the substrate binding site. Histidine 171, histidine 216, and histidine 281 together coordinate a divalent metal cation. Residues lysine 289, asparagine 298, and arginine 307 each coordinate substrate.

It belongs to the PdxA family. As to quaternary structure, homodimer. The cofactor is a divalent metal cation.

It localises to the cytoplasm. It catalyses the reaction 4-(phosphooxy)-L-threonine + NAD(+) = 3-amino-2-oxopropyl phosphate + CO2 + NADH. Its pathway is cofactor biosynthesis; pyridoxine 5'-phosphate biosynthesis; pyridoxine 5'-phosphate from D-erythrose 4-phosphate: step 4/5. Catalyzes the NAD(P)-dependent oxidation of 4-(phosphooxy)-L-threonine (HTP) into 2-amino-3-oxo-4-(phosphooxy)butyric acid which spontaneously decarboxylates to form 3-amino-2-oxopropyl phosphate (AHAP). This Synechocystis sp. (strain ATCC 27184 / PCC 6803 / Kazusa) protein is 4-hydroxythreonine-4-phosphate dehydrogenase.